We begin with the raw amino-acid sequence, 113 residues long: MFPYKIVDDVVILMPNKELNIENAHLFKKWVFDEFLNKGYNKIFLVLSDVESIDSFSLGVIVNILKSISSSGGFFALVSPNEKVERVLSLTNLDRIVKIYDTISEAMEEVRRK.

One can recognise an STAS domain in the interval 1–110 (MFPYKIVDDV…DTISEAMEEV (110 aa)). Residue serine 55 is modified to Phosphoserine.

This sequence belongs to the anti-sigma-factor antagonist family. Post-translationally, phosphorylated on a serine residue.

In terms of biological role, in the phosphorylated form it could act as an anti-anti-sigma factor that counteracts an anti-sigma factor and thus releases a sigma factor from inhibition. This is Putative anti-sigma factor antagonist TM_1081 from Thermotoga maritima (strain ATCC 43589 / DSM 3109 / JCM 10099 / NBRC 100826 / MSB8).